The primary structure comprises 103 residues: Putative membrane protein insertion efficiency factor (103 aa).

This sequence belongs to the UPF0161 family.

The protein localises to the cell inner membrane. In terms of biological role, could be involved in insertion of integral membrane proteins into the membrane. This Chlamydia caviae (strain ATCC VR-813 / DSM 19441 / 03DC25 / GPIC) (Chlamydophila caviae) protein is Putative membrane protein insertion efficiency factor.